The following is a 336-amino-acid chain: tRNA N6-adenosine threonylcarbamoyltransferase (336 aa).

Fe cation is bound by residues His114 and His118. Substrate is bound by residues 136–140 (LVSGG), Asp169, Gly182, Asp186, and Asn275. Asp302 is a Fe cation binding site.

This sequence belongs to the KAE1 / TsaD family. It depends on Fe(2+) as a cofactor.

It localises to the cytoplasm. The catalysed reaction is L-threonylcarbamoyladenylate + adenosine(37) in tRNA = N(6)-L-threonylcarbamoyladenosine(37) in tRNA + AMP + H(+). Its function is as follows. Required for the formation of a threonylcarbamoyl group on adenosine at position 37 (t(6)A37) in tRNAs that read codons beginning with adenine. Is involved in the transfer of the threonylcarbamoyl moiety of threonylcarbamoyl-AMP (TC-AMP) to the N6 group of A37, together with TsaE and TsaB. TsaD likely plays a direct catalytic role in this reaction. The chain is tRNA N6-adenosine threonylcarbamoyltransferase from Streptococcus agalactiae serotype V (strain ATCC BAA-611 / 2603 V/R).